A 709-amino-acid polypeptide reads, in one-letter code: ATP-binding cassette sub-family F member 3 (709 aa).

A2 bears the N-acetylalanine mark. Position 83 is a phosphoserine (S83). The segment covering 129–143 (RLKAKQEKRSEKDTL) has biased composition (basic and acidic residues). A disordered region spans residues 129-171 (RLKAKQEKRSEKDTLKTSNPLVLEEASASQAGSRKESRLESSG). 3 positions are modified to phosphoserine: S155, S157, and S161. The segment covering 161–171 (SRKESRLESSG) has biased composition (basic and acidic residues). 2 consecutive ABC transporter domains span residues 178-424 (VRIE…LNQQ) and 492-707 (LQLD…RREG). Residue 210–217 (GRNGLGKT) coordinates ATP. S283 bears the Phosphoserine mark. 525-532 (GENGAGKS) contacts ATP.

The protein belongs to the ABC transporter superfamily. ABCF family. EF3 subfamily.

Functionally, displays an antiviral effect against flaviviruses in the presence of OAS1B. The sequence is that of ATP-binding cassette sub-family F member 3 (ABCF3) from Pongo abelii (Sumatran orangutan).